Consider the following 140-residue polypeptide: Sec-independent protein translocase protein TatB (140 aa).

A helical transmembrane segment spans residues 1–21 (MFDIGFSELLLIAVVALVVLG). Residues 119 to 140 (VHVTSPPPSTSTHGNNGQEKSQ) are disordered. Over residues 128–140 (TSTHGNNGQEKSQ) the composition is skewed to polar residues.

The protein belongs to the TatB family. In terms of assembly, the Tat system comprises two distinct complexes: a TatABC complex, containing multiple copies of TatA, TatB and TatC subunits, and a separate TatA complex, containing only TatA subunits. Substrates initially bind to the TatABC complex, which probably triggers association of the separate TatA complex to form the active translocon.

It is found in the cell inner membrane. Functionally, part of the twin-arginine translocation (Tat) system that transports large folded proteins containing a characteristic twin-arginine motif in their signal peptide across membranes. Together with TatC, TatB is part of a receptor directly interacting with Tat signal peptides. TatB may form an oligomeric binding site that transiently accommodates folded Tat precursor proteins before their translocation. This Xylella fastidiosa (strain 9a5c) protein is Sec-independent protein translocase protein TatB.